A 116-amino-acid chain; its full sequence is ATP-dependent Clp protease adapter protein ClpS (116 aa).

Residues 1–11 (MRRINTIMQGK) show a composition bias toward polar residues. The tract at residues 1–23 (MRRINTIMQGKTNGGNGPESGTV) is disordered.

It belongs to the ClpS family. In terms of assembly, binds to the N-terminal domain of the chaperone ClpA.

In terms of biological role, involved in the modulation of the specificity of the ClpAP-mediated ATP-dependent protein degradation. In Brucella abortus (strain S19), this protein is ATP-dependent Clp protease adapter protein ClpS.